A 331-amino-acid chain; its full sequence is Ketol-acid reductoisomerase (NADP(+)) (331 aa).

A KARI N-terminal Rossmann domain is found at 1 to 181; that stretch reads MKVYYEKDAN…GGSRSGVIET (181 aa). NADP(+) is bound by residues 24-27, Arg47, and 82-85; these read YGSQ and DQVQ. Residue His107 is part of the active site. Gly133 serves as a coordination point for NADP(+). The 146-residue stretch at 182–327 folds into the KARI C-terminal knotted domain; that stretch reads TFREETETDL…GELRGMMPWL (146 aa). The Mg(2+) site is built by Asp190, Glu194, Glu226, and Glu230. Position 251 (Ser251) interacts with substrate.

This sequence belongs to the ketol-acid reductoisomerase family. Requires Mg(2+) as cofactor.

The enzyme catalyses (2R)-2,3-dihydroxy-3-methylbutanoate + NADP(+) = (2S)-2-acetolactate + NADPH + H(+). It catalyses the reaction (2R,3R)-2,3-dihydroxy-3-methylpentanoate + NADP(+) = (S)-2-ethyl-2-hydroxy-3-oxobutanoate + NADPH + H(+). The protein operates within amino-acid biosynthesis; L-isoleucine biosynthesis; L-isoleucine from 2-oxobutanoate: step 2/4. Its pathway is amino-acid biosynthesis; L-valine biosynthesis; L-valine from pyruvate: step 2/4. Its function is as follows. Involved in the biosynthesis of branched-chain amino acids (BCAA). Catalyzes an alkyl-migration followed by a ketol-acid reduction of (S)-2-acetolactate (S2AL) to yield (R)-2,3-dihydroxy-isovalerate. In the isomerase reaction, S2AL is rearranged via a Mg-dependent methyl migration to produce 3-hydroxy-3-methyl-2-ketobutyrate (HMKB). In the reductase reaction, this 2-ketoacid undergoes a metal-dependent reduction by NADPH to yield (R)-2,3-dihydroxy-isovalerate. This Nitratidesulfovibrio vulgaris (strain ATCC 29579 / DSM 644 / CCUG 34227 / NCIMB 8303 / VKM B-1760 / Hildenborough) (Desulfovibrio vulgaris) protein is Ketol-acid reductoisomerase (NADP(+)).